A 509-amino-acid polypeptide reads, in one-letter code: Glycogen synthase 2 (509 aa).

Lysine 15 is a binding site for ADP-alpha-D-glucose.

The protein belongs to the glycosyltransferase 1 family. Bacterial/plant glycogen synthase subfamily.

It catalyses the reaction [(1-&gt;4)-alpha-D-glucosyl](n) + ADP-alpha-D-glucose = [(1-&gt;4)-alpha-D-glucosyl](n+1) + ADP + H(+). Its pathway is glycan biosynthesis; glycogen biosynthesis. Its function is as follows. Synthesizes alpha-1,4-glucan chains using ADP-glucose. The chain is Glycogen synthase 2 (glgA2) from Agrobacterium fabrum (strain C58 / ATCC 33970) (Agrobacterium tumefaciens (strain C58)).